The sequence spans 66 residues: MQKEIQPKYNPVEVRCACGNTFVAGSTKDEIKVEICSECHPFYTGKQKNIEKGGRIDKFKKRFKMD.

Zn(2+)-binding residues include Cys16, Cys18, Cys36, and Cys39.

It belongs to the bacterial ribosomal protein bL31 family. Type A subfamily. As to quaternary structure, part of the 50S ribosomal subunit. It depends on Zn(2+) as a cofactor.

In terms of biological role, binds the 23S rRNA. The polypeptide is Large ribosomal subunit protein bL31 (Clostridioides difficile (strain 630) (Peptoclostridium difficile)).